Consider the following 231-residue polypeptide: MGHKIHPKSIRLGYIKDWESKWFNLKEMPNFIEEDYRIRVYLKNRLKLASVSKIVIERPGKYLRVSIYTARPGIVIGKGGQGIESLRKEIETMTAKKTFVNIMEIKRPEIDAQLASENIAFQLEKQIAFRRVMKRTIEKAMMSGVQGIKVMVSGRLGGAEIARTEWLKEGRIPLQTFRADIDYGFSEACTPMGHIGVKVWIFKKEFFKKTAKELAEDAKVVVDLDTAAKQG.

A KH type-2 domain is found at 38–106 (IRVYLKNRLK…KTFVNIMEIK (69 aa)).

The protein belongs to the universal ribosomal protein uS3 family. Part of the 30S ribosomal subunit. Forms a tight complex with proteins S10 and S14.

Its function is as follows. Binds the lower part of the 30S subunit head. Binds mRNA in the 70S ribosome, positioning it for translation. This is Small ribosomal subunit protein uS3 from Endomicrobium trichonymphae.